Here is an 882-residue protein sequence, read N- to C-terminus: MTEITVEKLATEVGKTVDRLIEQFAQAGIKKAKADTVSESEKQQLLDFLKKQHGADAQPTKMTLQRKTVSTLSVSSGGGQSKDVKVEVRKKRTFVKRDGNEAALKAEEEARAQAEAQAKAEAEAKAKAEAEAKAKADAEAKAKAKAEAEAKAKASASAAKEQPKPVESEEAKAEAARLKSQQEEAAKSKAAQEEAAAKEKARLLAEENAARWAEEERRRIEAERYGDHHVTTSKVARAAEDSADLDDEKRGRRNRNKTQTKSKRGGKDAREGREKHMKYKSTPESMAHGFNKPVAAVTRDVRIGETVTVAELAQKMAVKATEIIKAMMKMGSMVTINQVLDQETAQLVAEEMGHKVVLLRENELEHQVLADRDDEGTTKLEPRAPVVTIMGHVDHGKTSLLDYIRRTKVAAGEAGGITQHIGAYHVETDNGMITFLDTPGHAAFTAMRARGAKATDIVILVVAADDGVMPQTIEAIQHAKAGNVPLIVAVNKMDKPEADIDRVKNELSQHGVMSEDWGGENMFCYVSAKTGQGVDELLEAILLQAEVLELKAVRDGMAAGVVIESQLDKGRGPVATVLVQEGTLRQGDIVLCGLEYGKIRAMKDENGRPIMEAGPSIPVEILGLSGVPSAGDEATVVRDERKAREVALYRQGKFRDVKLARQQKSKLENMFANMTEGEVQELNIVLKADVQGSLEAITDSLRKLSTDEVKVNIIASGVGALTETDATLAAASNAIMVGFNVRADAQARKTIESEAVDLRYYSVIYDLIDEVKSAMSGMLSPEFKQQIIGLAEVRDVFKSPKLGAIAGCMVIEGIVKRSAPIRVLRENVVIYEGELESLRRFKDDVNEVRNGMECGIGVKNYNDVRVGDQIEVFETIEVARTL.

Disordered regions lie at residues 67 to 202 (KTVS…EKAR) and 223 to 278 (ERYG…KHMK). Basic and acidic residues-rich tracts occupy residues 95–152 (VKRD…EAKA) and 161–202 (EQPK…EKAR). Positions 251–264 (GRRNRNKTQTKSKR) are enriched in basic residues. Residues 265-274 (GGKDAREGRE) show a composition bias toward basic and acidic residues. The 170-residue stretch at 382 to 551 (PRAPVVTIMG…LLQAEVLELK (170 aa)) folds into the tr-type G domain. The tract at residues 391 to 398 (GHVDHGKT) is G1. 391 to 398 (GHVDHGKT) is a binding site for GTP. Residues 416–420 (GITQH) are G2. Positions 437–440 (DTPG) are G3. Residues 437-441 (DTPGH) and 491-494 (NKMD) contribute to the GTP site. The G4 stretch occupies residues 491-494 (NKMD). Positions 527–529 (SAK) are G5.

The protein belongs to the TRAFAC class translation factor GTPase superfamily. Classic translation factor GTPase family. IF-2 subfamily.

The protein resides in the cytoplasm. One of the essential components for the initiation of protein synthesis. Protects formylmethionyl-tRNA from spontaneous hydrolysis and promotes its binding to the 30S ribosomal subunits. Also involved in the hydrolysis of GTP during the formation of the 70S ribosomal complex. The protein is Translation initiation factor IF-2 of Shewanella amazonensis (strain ATCC BAA-1098 / SB2B).